A 475-amino-acid polypeptide reads, in one-letter code: Equilibrative nucleoside transporter 3 (475 aa).

Residues 1–51 (MAFASEDNVYHSSNAVYRAPSNHQEADQEALLGKLLDYPAPGLQRPEDRFN) are Cytoplasmic-facing. At Ser21 the chain carries Phosphoserine. Residues 31-32 (LL) carry the Dileucine internalization motif motif. Residues 52 to 72 (GAYIIFFCLGIGGLLPWNFFV) form a helical membrane-spanning segment. At 73–105 (TAKEYWAYKLRNCSSPASGEDPEDMDILNYFES) the chain is on the extracellular side. Asn84 carries N-linked (GlcNAc...) asparagine glycosylation. Residues 106–126 (YLAVASTVPSLLFLVANFLLV) traverse the membrane as a helical segment. Residues 127–134 (NRVQVHVR) lie on the Cytoplasmic side of the membrane. A helical transmembrane segment spans residues 135–155 (VLASLSVSLAIFVVMIVLVKV). The Extracellular segment spans residues 156–162 (DTSSWTR). A helical membrane pass occupies residues 163-183 (GFFSLTIACMAIISSSSTIFN). At 184–199 (SSVYGLTGSFPMRNAQ) the chain is on the cytoplasmic side. Residues 200 to 220 (ALISGGAMGGTVSAVALLVDL) traverse the membrane as a helical segment. At 221–230 (AASSDVRDST) the chain is on the extracellular side. The helical transmembrane segment at 231 to 251 (LAFFLMAAVFLGLCMGLYLLL) threads the bilayer. The Cytoplasmic segment spans residues 252–305 (SQLEYARYYMRPVAPVRVFSGEDNPSQDAPSASSVAPASRVMHTPPLGPILKKT). The chain crosses the membrane as a helical span at residues 306 to 326 (ASLGFCAVSLYFVTAFIIPAI). The Extracellular portion of the chain corresponds to 327-340 (STNIQSMHKGTGSP). The helical transmembrane segment at 341–361 (WTSKFFVPLTVFLLFNFADLC) threads the bilayer. Residues 362-377 (GRQVTAWIQVPGPRSK) lie on the Cytoplasmic side of the membrane. A helical transmembrane segment spans residues 378 to 398 (LLPGLVVSRFCLVPLFLLCNY). The Extracellular segment spans residues 399 to 415 (QPRSHLTKVLFQSDIYP). A helical membrane pass occupies residues 416–436 (VLFTCLLGLSNGYLSTLVLIY). Over 437 to 450 (GPKIVPRELAEATS) the chain is Cytoplasmic. The chain crosses the membrane as a helical span at residues 451-471 (VVMLFYMSVGLMLGSACAALL). The Extracellular portion of the chain corresponds to 472–475 (EHFI).

Belongs to the SLC29A/ENT transporter (TC 2.A.57) family. As to expression, expressed in macrophages.

Its subcellular location is the lysosome membrane. The protein localises to the late endosome membrane. The protein resides in the mitochondrion membrane. It localises to the cell membrane. It catalyses the reaction adenosine(in) = adenosine(out). The enzyme catalyses guanosine(in) = guanosine(out). The catalysed reaction is inosine(in) = inosine(out). It carries out the reaction uridine(out) = uridine(in). It catalyses the reaction cytidine(in) = cytidine(out). The enzyme catalyses thymidine(in) = thymidine(out). The catalysed reaction is 2'-deoxyadenosine(in) = 2'-deoxyadenosine(out). It carries out the reaction 2'-deoxycytidine(in) = 2'-deoxycytidine(out). It catalyses the reaction guanine(out) = guanine(in). The enzyme catalyses uracil(in) = uracil(out). The catalysed reaction is (R)-noradrenaline(out) = (R)-noradrenaline(in). It carries out the reaction dopamine(out) = dopamine(in). It catalyses the reaction serotonin(out) = serotonin(in). The enzyme catalyses tyramine(in) = tyramine(out). The catalysed reaction is ATP(in) = ATP(out). In terms of biological role, uniporter that mediates the facilitative transport of nucleoside across lysosomal and mitochondrial membranes. Functions as a non-electrogenic Na(+)-independent transporter. Substrate transport is pH-dependent and enhanced under acidic condition, probably reflecting the location of the transporter in acidic intracellular compartments. Proton is not a cotransporting ion but most likely change the ionization state of the transporter which dictates transport-permissible/impermissible conformation for nucleoside translocation. May direct the nucleoside transport from lysosomes to cytosol or cytosol to mitochondria to facilitate the fundamental function of salvage synthesis of nucleic acids. Involved in the transport of nucleosides (adenosine, guanosine, uridine, thymidine, cytidine and inosine) and deoxynucleosides (deoxyadenosine, deoxycytidine). Also mediates transport of purine nucleobases (adenine, guanine), and pyrimidine nucleobases (uracil). Also able to transport monoamine neurotransmitters dopamine, serotonin, noradrenaline and tyramine. Capable of transporting ATP. Mediates nucleoside export from lysosomes in macrophages, which regulates macrophage functions and numbers. The polypeptide is Equilibrative nucleoside transporter 3 (Mus musculus (Mouse)).